An 847-amino-acid polypeptide reads, in one-letter code: Alpha-glucuronidase (847 aa).

An N-terminal signal peptide occupies residues 1–19 (MVIRSLLLLLLAAIVPVFA). 8 N-linked (GlcNAc...) asparagine glycosylation sites follow: N52, N238, N321, N353, N586, N692, N740, and N767.

Belongs to the glycosyl hydrolase 67 family.

It localises to the secreted. It catalyses the reaction an alpha-D-glucuronoside + H2O = D-glucuronate + an alcohol. In terms of biological role, releases 4-O-methylglucuronic acid from xylan. The protein is Alpha-glucuronidase of Hypocrea jecorina (Trichoderma reesei).